We begin with the raw amino-acid sequence, 223 residues long: Deoxyribose-phosphate aldolase (223 aa).

The Proton donor/acceptor role is filled by aspartate 91. Residue lysine 154 is the Schiff-base intermediate with acetaldehyde of the active site. Catalysis depends on lysine 183, which acts as the Proton donor/acceptor.

This sequence belongs to the DeoC/FbaB aldolase family. DeoC type 1 subfamily.

Its subcellular location is the cytoplasm. It carries out the reaction 2-deoxy-D-ribose 5-phosphate = D-glyceraldehyde 3-phosphate + acetaldehyde. The protein operates within carbohydrate degradation; 2-deoxy-D-ribose 1-phosphate degradation; D-glyceraldehyde 3-phosphate and acetaldehyde from 2-deoxy-alpha-D-ribose 1-phosphate: step 2/2. Catalyzes a reversible aldol reaction between acetaldehyde and D-glyceraldehyde 3-phosphate to generate 2-deoxy-D-ribose 5-phosphate. The polypeptide is Deoxyribose-phosphate aldolase (Lysinibacillus sphaericus (strain C3-41)).